A 342-amino-acid polypeptide reads, in one-letter code: (+)-pulegone reductase (342 aa).

NADP(+)-binding positions include 163–166 (GSVG), lysine 189, tyrosine 205, asparagine 229, 251–257 (CGMVSQY), 281–283 (FVV), and asparagine 331.

The protein belongs to the NADP-dependent oxidoreductase L4BD family.

It is found in the cytoplasm. The catalysed reaction is (2R,5R)-isomenthone + NADP(+) = (R)-pulegone + NADPH + H(+). It catalyses the reaction (1R,4S)-menthone + NADP(+) = (R)-pulegone + NADPH + H(+). Its pathway is secondary metabolite biosynthesis; terpenoid biosynthesis. Not inhibited by (+)-menthofuran. Monoterpene synthase that catalyzes the specific reduction of the 4,8-double bond of (+)-pulegone to produce both (-)-menthone and (+)-isomenthone in a 70:30 ratio. Unable to utilize either (-)-isopiperitenone or (+)-cis-isopulegone, or to catalyze the reverse reaction with (-)-menthone or (+)-isomenthone. Has an absolute requirement for NADPH. This is (+)-pulegone reductase from Mentha piperita (Peppermint).